Here is a 301-residue protein sequence, read N- to C-terminus: G-protein coupled receptor homolog U51 (301 aa).

Residues 1–15 (MEKETKSLAWPATAE) lie on the Extracellular side of the membrane. Residues 16-36 (FYGWVFIFSSIQLCTVVFLTV) form a helical membrane-spanning segment. Topologically, residues 37–48 (RFNGFKVGREYA) are cytoplasmic. The chain crosses the membrane as a helical span at residues 49–69 (VFTFAGMSFNCFLLPIKMGLL). Topologically, residues 70–82 (SGHWTLPRDFCAI) are extracellular. The helical transmembrane segment at 83-103 (LLYIDDFSAYFSSWSLVFMAI) threads the bilayer. The Cytoplasmic portion of the chain corresponds to 104–122 (ERINYFCYSTPLLNENSKA). The chain crosses the membrane as a helical span at residues 123–143 (LAKVCFPIVWVVSGVQALQML). Residues 144–168 (NNYKATALQNETGQCFLAFLRSGHD) lie on the Extracellular side of the membrane. A glycan (N-linked (GlcNAc...) asparagine; by host) is linked at N153. A helical membrane pass occupies residues 169-189 (MWLMLVYSVVIPVMLVFFYLY). The Cytoplasmic segment spans residues 190–199 (SKNFMLLKDE). The chain crosses the membrane as a helical span at residues 200-220 (LSSVTTYLCIYLLLGTIAHLP). Topologically, residues 221–238 (KAALSEIESDKIFYGLRD) are extracellular. A helical transmembrane segment spans residues 239–259 (IFMALPVLKVYYISAMAYCMA). The Cytoplasmic segment spans residues 260–301 (CDDHTVPVRLCSIWLVNLCKKCFSCTRREKGSDLEVGIKMLK).

It belongs to the G-protein coupled receptor 1 family.

Its subcellular location is the host cell membrane. This chain is G-protein coupled receptor homolog U51 (U51), found in Homo sapiens (Human).